A 452-amino-acid chain; its full sequence is NADH-quinone oxidoreductase subunit H (452 aa).

9 helical membrane passes run 28-48 (IILI…LMMI), 96-116 (VIYI…FSVI), 136-156 (LPVA…GIVL), 177-197 (VISY…YAGT), 210-230 (IWFA…MIGE), 264-286 (AEYV…GYLA), 301-321 (WWPA…FVWV), 335-355 (KLGW…VAVI), and 366-386 (YVTA…LWAW).

This sequence belongs to the complex I subunit 1 family. As to quaternary structure, NDH-1 is composed of 14 different subunits. Subunits NuoA, H, J, K, L, M, N constitute the membrane sector of the complex.

Its subcellular location is the cell membrane. The enzyme catalyses a quinone + NADH + 5 H(+)(in) = a quinol + NAD(+) + 4 H(+)(out). Its function is as follows. NDH-1 shuttles electrons from NADH, via FMN and iron-sulfur (Fe-S) centers, to quinones in the respiratory chain. The immediate electron acceptor for the enzyme in this species is believed to be ubiquinone. Couples the redox reaction to proton translocation (for every two electrons transferred, four hydrogen ions are translocated across the cytoplasmic membrane), and thus conserves the redox energy in a proton gradient. This subunit may bind ubiquinone. This Thermobifida fusca (strain YX) protein is NADH-quinone oxidoreductase subunit H.